The sequence spans 176 residues: Inorganic pyrophosphatase (176 aa).

Substrate is bound by residues K30, R44, and Y56. Residues D66, D71, and D103 each contribute to the Mg(2+) site. A substrate-binding site is contributed by Y142.

It belongs to the PPase family. Homohexamer. Requires Mg(2+) as cofactor.

It localises to the cytoplasm. It catalyses the reaction diphosphate + H2O = 2 phosphate + H(+). Catalyzes the hydrolysis of inorganic pyrophosphate (PPi) forming two phosphate ions. In Vibrio vulnificus (strain CMCP6), this protein is Inorganic pyrophosphatase.